A 477-amino-acid polypeptide reads, in one-letter code: Ribulose bisphosphate carboxylase large chain (477 aa).

Positions 1 to 2 are excised as a propeptide; that stretch reads MS. Residue Pro-3 is modified to N-acetylproline. Substrate-binding residues include Asn-123 and Thr-173. Lys-175 acts as the Proton acceptor in catalysis. Lys-177 is a substrate binding site. 3 residues coordinate Mg(2+): Lys-201, Asp-203, and Glu-204. N6-carboxylysine is present on Lys-201. Residue His-294 is the Proton acceptor of the active site. Positions 295, 327, and 379 each coordinate substrate.

The protein belongs to the RuBisCO large chain family. Type I subfamily. As to quaternary structure, heterohexadecamer of 8 large chains and 8 small chains; disulfide-linked. The disulfide link is formed within the large subunit homodimers. Mg(2+) serves as cofactor. The disulfide bond which can form between Cys-247 in the large chain dimeric partners within the hexadecamer appears to be associated with oxidative stress and protein turnover.

It is found in the plastid. It localises to the chloroplast. The catalysed reaction is 2 (2R)-3-phosphoglycerate + 2 H(+) = D-ribulose 1,5-bisphosphate + CO2 + H2O. It catalyses the reaction D-ribulose 1,5-bisphosphate + O2 = 2-phosphoglycolate + (2R)-3-phosphoglycerate + 2 H(+). Its function is as follows. RuBisCO catalyzes two reactions: the carboxylation of D-ribulose 1,5-bisphosphate, the primary event in carbon dioxide fixation, as well as the oxidative fragmentation of the pentose substrate in the photorespiration process. Both reactions occur simultaneously and in competition at the same active site. The sequence is that of Ribulose bisphosphate carboxylase large chain (rbcL) from Triticum aestivum (Wheat).